The primary structure comprises 491 residues: Immediate early protein IE1 (491 aa).

Basic and acidic residues predominate over residues 1-11; that stretch reads MESSAKRKMDP. Residues 1-24 form a nuclear localization signal region; sequence MESSAKRKMDPDNPDEGPSSKVPR. The segment at 1–30 is disordered; sequence MESSAKRKMDPDNPDEGPSSKVPRPETPVT. The tract at residues 132–346 is interaction with host PML, interference with PML sumoylation and disruption of PML-associated nuclear bodies; sequence ILDKVHEPFE…SVMKRRIEEI (215 aa). Residues 373–445 form an interaction with host STAT2 region; it reads AIAEESDEEE…EEGAQEERED (73 aa). Residues 410–420 form a modulation of STAT3/STAT1 signaling region; it reads ATIPLSSVIVA. Positions 410–445 are interaction with host STAT3; the sequence is ATIPLSSVIVAENSDQEESEQSDEEEEEGAQEERED. The tract at residues 421 to 472 is acidic; sequence ENSDQEESEQSDEEEEEGAQEEREDTVSVKSEPVSEIEEVAPEEEEDGAEEP. The disordered stretch occupies residues 421-491; it reads ENSDQEESEQ…PMVTRSKADQ (71 aa). Acidic residues predominate over residues 423–444; it reads SDQEESEQSDEEEEEGAQEERE. Residues 449 to 452 form an interaction with host SUMO1 region; it reads VKSE. A Glycyl lysine isopeptide (Lys-Gly) (interchain with G-Cter in SUMO) cross-link involves residue Lys450. Acidic residues predominate over residues 455 to 470; that stretch reads SEIEEVAPEEEEDGAE. A chromosome-tethering domain (CTD), binding to histones region spans residues 475-491; the sequence is SGGKSTHPMVTRSKADQ.

Belongs to the HHV-5 IE1 protein family. As to quaternary structure, forms homodimers. Interacts with human p53/TP53; this interaction inhibits p53/TP53-dependent transactivation activity. Interacts with host STAT1. Interacts with host STAT2; this interaction promotes viral growth and counteracts the antiviral interferon response. May also interact with the host STAT1-STAT2 heterodimer. Interacts with host STAT3; this interaction leads to STAT3 nuclear accumulation and disruption of IL6-induced STAT3 phosphorylation. Interacts with host PML; this interaction inhibits host PML de novo sumoylation and probably inhibits PML regulation of type I and type II interferon-induced gene expression. Interacts with host DAXX. Interacts with host SP100. Interacts with host E2F1. Interacts with host RB1. Interacts with host HDAC1; this interaction inhibits histone deacetylation and promotes viral transcription. Interacts with host HDAC2; this interaction inhibits histone deacetylation and promotes viral transcription. Interacts with host HDAC3; this interaction inhibits histone deacetylation and promotes viral transcription. Interacts with host PLSCR1; this interaction inhibits IE1 transactivating activity. In terms of processing, sumoylated by host PML. Sumoylation abolishes the interaction with host STAT2 and thus the IE1-mediated repression of interferon-stimulated genes.

It is found in the host nucleus. Functionally, plays an important role in transactivating viral early genes as well as activating its own promoter, probably by altering the viral chromatin structure. Expression of IE1 and IE2 proteins is critical for the establishment of lytic infection and reactivation from viral latency. Disrupts PML-associated ND10 nuclear bodies by interfering with host PML and SP100 sumoylation thereby altering the regulation of type I and type II interferon-induced gene expression. Promotes efficient viral growth by interacting with and directing host SP100 to degradation, leading to enhanced acetylation level of histones. In addition, functions in counteracting the host innate antiviral response. Inhibits the type I interferon pathway by directly interacting with and sequestrating host STAT2. Also targets type II interferon pathway by repressing IL6- and STAT3 target genes. Repression of STAT3 genes is due to STAT3 nuclear accumulation and disruption of IL6-induced STAT3 phosphorylation by IE1. This repression is followed by phosphorylation and activation of STAT1. Inhibits host ISG transcription by sequestering host ISGF3 in a PML- and STAT2- binding dependent manner. Alters host cell cycle progression, probably through its interaction with host E2F1 or RB1 that overcomes the RB1-mediated repression of E2F-responsive promoters. In Human cytomegalovirus (strain AD169) (HHV-5), this protein is Immediate early protein IE1 (UL123).